The chain runs to 528 residues: Lysine--tRNA ligase (528 aa).

Positions 36 to 44 (PSGTVHIGN) match the 'HIGH' region motif. The 'KMSKS' region signature appears at 287-291 (KMSSS).

This sequence belongs to the class-I aminoacyl-tRNA synthetase family.

The protein resides in the cytoplasm. It catalyses the reaction tRNA(Lys) + L-lysine + ATP = L-lysyl-tRNA(Lys) + AMP + diphosphate. The polypeptide is Lysine--tRNA ligase (lysS) (Treponema pallidum (strain Nichols)).